Here is a 225-residue protein sequence, read N- to C-terminus: Nucleolar protein 6 (225 aa).

Positions 1-75 are disordered; sequence MGSEEDKKLT…GGKGKNGKKG (75 aa). Basic residues predominate over residues 9–20; sequence LTKKQLKAQQFR. A compositionally biased stretch (basic and acidic residues) spans 21-42; that stretch reads KSKEEKDQEKDVKKEQAPEGKR. A Phosphoserine modification is found at S45. The span at 56 to 75 shows a compositional bias: basic residues; it reads KKKRKTRRGRGGKGKNGKKG. In terms of domain architecture, RRM spans 78 to 155; that stretch reads FIVFVGSLPR…KKINVELTVG (78 aa). Phosphoserine is present on S160. Residues 187–225 are disordered; the sequence is NDGNQKKIAKTTATAAQTSGTDNKPVPAGIHPDRAKLLK.

This sequence belongs to the RRM NOP6 family.

The protein resides in the nucleus. The protein localises to the nucleolus. In terms of biological role, predicted to be involved in rRNA processing. In Saccharomyces cerevisiae (strain ATCC 204508 / S288c) (Baker's yeast), this protein is Nucleolar protein 6 (NOP6).